We begin with the raw amino-acid sequence, 283 residues long: MGVILEGKPVAEKLEKEIKEKIEIYKTKGIIPNLCIVKVGENEEAEAYAKSIERFFSRIGINVERKNFAENVSLLEFQKALKELEKNNKVHGILILRPLSEELERQKAFRFLSPDKDVEGITYENLGKLFVGEKCFHPCTPQAVIELLDFYKISVEGKDVVVVGRSISVGKPLSILLLNRNATVTICHSKTKNLEELTRRAEVLVAAVGRPHFIGKDMVKEGQVVIDIGTNVVEGKLVGDVNFEEVKDKVGYITPVPGGIGIITTRVLAMNLLKAVEKNEARN.

NADP(+) is bound by residues 164-166 (GRS), Ser189, and Thr230.

The protein belongs to the tetrahydrofolate dehydrogenase/cyclohydrolase family. Homodimer.

It carries out the reaction (6R)-5,10-methylene-5,6,7,8-tetrahydrofolate + NADP(+) = (6R)-5,10-methenyltetrahydrofolate + NADPH. The enzyme catalyses (6R)-5,10-methenyltetrahydrofolate + H2O = (6R)-10-formyltetrahydrofolate + H(+). It functions in the pathway one-carbon metabolism; tetrahydrofolate interconversion. Its function is as follows. Catalyzes the oxidation of 5,10-methylenetetrahydrofolate to 5,10-methenyltetrahydrofolate and then the hydrolysis of 5,10-methenyltetrahydrofolate to 10-formyltetrahydrofolate. The protein is Bifunctional protein FolD of Dictyoglomus thermophilum (strain ATCC 35947 / DSM 3960 / H-6-12).